A 505-amino-acid polypeptide reads, in one-letter code: Bile acid-sensitive ion channel (505 aa).

Residues 1–30 (MEQTEKSKVYAENGLLEKIKLCLSKKPLPS) form a binds the plasma membrane and stabilizes the channel in the closed state region. At 1 to 61 (MEQTEKSKVY…NIVQNRSKIR (61 aa)) the chain is on the cytoplasmic side. A helical membrane pass occupies residues 62–82 (RVLWLVVVLGSVSLVTWQIYI). Topologically, residues 83–459 (RLLNYFTWPT…GLFCGASLIT (377 aa)) are extracellular. Cystine bridges form between Cys112–Cys207, Cys185–Cys192, Cys298–Cys377, Cys315–Cys373, Cys328–Cys350, and Cys330–Cys342. 4 N-linked (GlcNAc...) asparagine glycosylation sites follow: Asn147, Asn163, Asn178, and Asn179. The N-linked (GlcNAc...) asparagine glycan is linked to Asn306. Asn370, Asn405, and Asn421 each carry an N-linked (GlcNAc...) asparagine glycan. The GAS motif; ion selectivity filter motif lies at 454–456 (GAS). The helical transmembrane segment at 460–480 (IIEIIEYLFTNFYWICIFFLL) threads the bilayer. At 481–505 (KISEMTQWTPPPQNHLGNKNRIEEC) the chain is on the cytoplasmic side.

Belongs to the amiloride-sensitive sodium channel (TC 1.A.6) family. ASIC5 subfamily. In terms of assembly, forms homotrimeric channels. Detected in small intestine, duodenum and jejunum. Detected at very low levels in testis and rectum.

It localises to the apical cell membrane. The protein resides in the cell membrane. It carries out the reaction Na(+)(in) = Na(+)(out). The catalysed reaction is Li(+)(in) = Li(+)(out). It catalyses the reaction K(+)(in) = K(+)(out). The enzyme catalyses H(+)(in) = H(+)(out). With respect to regulation, inhibited by the diuretic drug amiloride. Functionally, forms bile acid-gated sodium channels and may play a role in bile acid-dependent absorption and secretion by epithelial cells of the bile ducts. Displays high selectivity for sodium ions but can also permit the permeation of other cations. The gating could be indirect and the consequence of alterations of the membrane environment of the channel by bile acids. As a sodium channel of type II unipolar brush cells of the vestibulocerebellum, controlling the electrical activity of these cells, could play a role in motor coordination and balance. The chain is Bile acid-sensitive ion channel from Homo sapiens (Human).